The following is a 92-amino-acid chain: Bombyxin A-1 (92 aa).

The N-terminal stretch at 1–19 (MKILLAIALMLSTVMWVST) is a signal peptide. Gln20 bears the Pyrrolidone carboxylic acid mark. Intrachain disulfides connect Cys29-Cys79, Cys41-Cys92, and Cys78-Cys83. Positions 50 to 70 (SGAQFASYGSAWLMPYSEGRG) are cleaved as a propeptide — c peptide like.

The protein belongs to the insulin family. Heterodimer of a B chain and an A chain linked by two disulfide bonds.

It localises to the secreted. Functionally, brain peptide responsible for activation of prothoracic glands to produce ecdysone in insects. The chain is Bombyxin A-1 (BBXA1) from Bombyx mori (Silk moth).